We begin with the raw amino-acid sequence, 956 residues long: Glutamate receptor ionotropic, kainate 4 (956 aa).

Positions 1–20 (MPRVSAPLVLLPAWLVMVAC) are cleaved as a signal peptide. Residues 21-545 (SPHSLRIAAI…YFSFLDPFSP (525 aa)) lie on the Extracellular side of the membrane. Residues Asn158, Asn220, Asn272, Asn286, Asn323, Asn408, Asn415, and Asn479 are each glycosylated (N-linked (GlcNAc...) asparagine). Positions 500, 502, and 507 each coordinate L-glutamate. The chain crosses the membrane as a helical span at residues 546–566 (GVWLFMLLAYLAVSCVLFLVA). The Cytoplasmic portion of the chain corresponds to 567-623 (RLTPYEWYSPHPCAQGRCNLLVNQYSLGNSLWFPVGGFMQQGSTIAPRALSTRCVSG). The chain crosses the membrane as a helical span at residues 624 to 644 (VWWAFTLIIISSYTANLAAFL). At 645–804 (TVQRMDVPIE…HRAKGLGMEN (160 aa)) the chain is on the extracellular side. L-glutamate-binding residues include Ser674, Ser675, and Glu723. N-linked (GlcNAc...) asparagine glycosylation is present at Asn736. Residues 805–825 (IGGIFVVLICGLIVAIFMAML) form a helical membrane-spanning segment. The Cytoplasmic portion of the chain corresponds to 826-956 (EFLWTLRHSE…EKTTNSSEPE (131 aa)). Disordered stretches follow at residues 863-889 (RRRAAVPPPRPPIPEERRPRGTATLSN) and 931-956 (LRARPSPARSEESLEWEKTTNSSEPE). The span at 939–948 (RSEESLEWEK) shows a compositional bias: basic and acidic residues.

This sequence belongs to the glutamate-gated ion channel (TC 1.A.10.1) family. GRIK4 subfamily. Homodimer. Can form functional heteromeric receptors with GRIK1, GRIK2 and GRIK3.

It localises to the cell membrane. The protein resides in the postsynaptic cell membrane. It is found in the presynaptic cell membrane. In terms of biological role, ionotropic glutamate receptor that functions as a cation-permeable ligand-gated ion channel. Cannot form functional channels on its own. Shows channel activity only in heteromeric assembly with GRIK1, GRIK2 and GRIK3 subunits. This Homo sapiens (Human) protein is Glutamate receptor ionotropic, kainate 4 (GRIK4).